We begin with the raw amino-acid sequence, 148 residues long: MYRQGTPNRVVISTVPLSGEATATAGTGPGCEGGLGGWRLFKACRHEQEDGLYAMLPPDYFPVVPSSKPLLVKVPAPGASPDRTGGAVHFECVPAPRRPLQFFRQLYDGTFVKLPHNFPDECYEDEAPLATASTSTPTWIRNPCPWET.

This is an uncharacterized protein from Bos taurus (Bovine).